The following is a 265-amino-acid chain: MISVSDCFESLRNNSSQCALIPFITAGDPDLETTAKALEVLDRSGANMIELGVPYSDPLADGPVIQAAATRSLNRGTTLESVLEVVQTVSPKLRSPIILFTYYNPILYRGVENFLKKIYDVGARGLVVPDLPLEEADILLEPAKDIGIELTLLVAPTSPKERIKAIAHQSQGFIYLVSVTGVTGMRAQMQTRVEDLLAQMREVTDKPIGVGFGISQPEQALQVKKWGSDAVIVGSAVVKRLAEGSPDEGLKAIGEFCQNLKAAIN.

Active-site proton acceptor residues include Glu50 and Asp61.

Belongs to the TrpA family. Tetramer of two alpha and two beta chains.

The catalysed reaction is (1S,2R)-1-C-(indol-3-yl)glycerol 3-phosphate + L-serine = D-glyceraldehyde 3-phosphate + L-tryptophan + H2O. Its pathway is amino-acid biosynthesis; L-tryptophan biosynthesis; L-tryptophan from chorismate: step 5/5. Functionally, the alpha subunit is responsible for the aldol cleavage of indoleglycerol phosphate to indole and glyceraldehyde 3-phosphate. This Trichodesmium erythraeum (strain IMS101) protein is Tryptophan synthase alpha chain.